The sequence spans 435 residues: Serine/threonine-protein kinase 40 (435 aa).

Residues 35–332 form the Protein kinase domain; sequence FVLGPRLGNS…DVLEALSAII (298 aa). ATP is bound by residues 41–49 and K66; that span reads LGNSPVPSI. The active-site Proton acceptor is the D197.

It belongs to the protein kinase superfamily. CAMK Ser/Thr protein kinase family.

It localises to the nucleus. Its subcellular location is the cytoplasm. It catalyses the reaction L-seryl-[protein] + ATP = O-phospho-L-seryl-[protein] + ADP + H(+). The catalysed reaction is L-threonyl-[protein] + ATP = O-phospho-L-threonyl-[protein] + ADP + H(+). Its function is as follows. May be a negative regulator of NF-kappa-B and p53-mediated gene transcription. The chain is Serine/threonine-protein kinase 40 (Stk40) from Mus musculus (Mouse).